Consider the following 93-residue polypeptide: Vacuolar ATPase assembly integral membrane protein VMA21 (93 aa).

The Cytoplasmic segment spans residues 1–21 (MSNRVSTGKMAMAPQESVQPA). A helical transmembrane segment spans residues 22–42 (VLYKLVLFALLMAVVPIGTYF). Residues 43-54 (STLNYLWDGSTT) lie on the Lumenal side of the membrane. A helical transmembrane segment spans residues 55–75 (FAAISAIAAANLILVGYVVVA). The Cytoplasmic portion of the chain corresponds to 76–93 (FREDAASRTGPLPEKKTS). Positions 90–93 (KKTS) match the Prevents secretion from ER motif.

Belongs to the VMA21 family.

It localises to the endoplasmic reticulum membrane. The protein localises to the endoplasmic reticulum-Golgi intermediate compartment membrane. The protein resides in the cytoplasmic vesicle. It is found in the COPII-coated vesicle membrane. Its function is as follows. Required for the assembly of the V0 complex of the vacuolar ATPase (V-ATPase) in the endoplasmic reticulum. This is Vacuolar ATPase assembly integral membrane protein VMA21 from Cryptococcus neoformans var. neoformans serotype D (strain JEC21 / ATCC MYA-565) (Filobasidiella neoformans).